The chain runs to 660 residues: Sodium/nucleoside cotransporter 2 (660 aa).

S46 is subject to Phosphoserine. Helical transmembrane passes span 82–102 (ILLGLLCLAYAAYFLAACILN), 106–125 (ALALFVITCLVIFILACHFL), 150–168 (KRVFVGLSVVGLILWLALD), 174–194 (EQLISFAGICMFILILFACSK), 202–222 (RTVFWGLGLQFIFGILVIRTE), 235–255 (IQIFLAYTVEGSSFVFGDTLV), 262–282 (QSLPIIIFFGCVMSILYYLGL), 297–316 (TMGTTAAETLAVAGNIFVGM), 338–357 (VMTGGFATIAGTVLGAFISF), 364–383 (LISASVMAAPCALALSKLVY), 425–445 (VAANLIAFLAVLAFINATLSW), 456–476 (SFQVICSYVLRPMVFMMGVQW), 531–551 (TTFSLCGFANLSSIGITLGGL), and 569–589 (ALFTGACVSFISACMAGILYV).

It belongs to the concentrative nucleoside transporter (CNT) (TC 2.A.41) family.

The protein resides in the membrane. It is found in the apicolateral cell membrane. The enzyme catalyses adenosine(out) + Na(+)(out) = adenosine(in) + Na(+)(in). It carries out the reaction inosine(out) + Na(+)(out) = inosine(in) + Na(+)(in). It catalyses the reaction guanosine(out) + Na(+)(out) = guanosine(in) + Na(+)(in). The catalysed reaction is uridine(out) + Na(+)(out) = uridine(in) + Na(+)(in). Functionally, sodium-dependent and purine-selective transporter. Exhibits the transport characteristics of the nucleoside transport system cif or N1 subtype (N1/cif) (selective for purine nucleosides and uridine). Plays a critical role in specific uptake and salvage of purine nucleosides in kidney and other tissues. May contribute to regulate the transport of organic compounds in testes across the blood-testis-barrier. This chain is Sodium/nucleoside cotransporter 2 (Slc28a2), found in Mus musculus (Mouse).